We begin with the raw amino-acid sequence, 483 residues long: Altronate oxidoreductase (483 aa).

Position 18–29 (18–29) interacts with NAD(+); the sequence is IIQFGEGNFLRA.

It belongs to the mannitol dehydrogenase family. UxaB subfamily.

It catalyses the reaction D-altronate + NAD(+) = keto-D-tagaturonate + NADH + H(+). Its pathway is carbohydrate metabolism; pentose and glucuronate interconversion. In Enterobacter sp. (strain 638), this protein is Altronate oxidoreductase.